Reading from the N-terminus, the 319-residue chain is Ciliary microtubule inner protein 2A (319 aa).

The protein belongs to the CIMIP2 family. In terms of assembly, microtubule inner protein component of sperm flagellar doublet microtubules.

The protein resides in the cytoplasm. The protein localises to the cytoskeleton. It is found in the flagellum axoneme. Functionally, microtubule inner protein (MIP) part of the dynein-decorated doublet microtubules (DMTs) in flagellum axoneme. Binds to the intra-tubulin interfaces. This is Ciliary microtubule inner protein 2A (Cimip2a) from Mus musculus (Mouse).